The following is a 287-amino-acid chain: Serine/arginine-rich SC35-like splicing factor SCL33 (287 aa).

The disordered stretch occupies residues 1–34 (MRGRSYTPSPPRGYGRRGRSPSPRGRYGGRSRDL). A phosphoserine mark is found at S9 and S20. The RRM domain maps to 36 to 114 (TSLLVRNLRH…RELTVVFAEE (79 aa)). The span at 116-132 (RKKPTEMRARERGGGRF) shows a compositional bias: basic and acidic residues. Residues 116–287 (RKKPTEMRAR…QYDEDRSPSQ (172 aa)) are disordered. Phosphoserine is present on residues S165, S175, S177, S188, and S190. Residues 177-187 (SPREERYDGRR) are compositionally biased toward basic and acidic residues. A compositionally biased stretch (basic residues) spans 220–237 (SISRSPRRSRSPSPKRNR). Phosphoserine is present on residues S238, S248, S271, S284, and S286. The segment covering 244-260 (SISRSPRRSRSPRRSRR) has biased composition (basic residues). Residues 278 to 287 (QYDEDRSPSQ) show a composition bias toward basic and acidic residues.

This sequence belongs to the splicing factor SR family. SCL subfamily. In terms of assembly, component of the spliceosome. Homodimer. Interacts with AFC2, CYP59, RS2Z33, RNU1 and SR45. The interaction with AFC2 depends on phosphorylation status. Post-translationally, phosphorylated by AFC2. As to expression, ubiquitous. Mostly expressed in roots, fruits and flowers, and, to a lower extent, in leaves.

It localises to the nucleus speckle. It is found in the nucleus. Its subcellular location is the nucleoplasm. The protein resides in the cytoplasm. Functionally, involved in intron recognition and spliceosome assembly. Binds to multiple 5'-GAAG-3' repeats found in its third intron, suggesting autoregulation of alternative splicing. May be necessary for accurate splicing of the 3' region of introns. The protein is Serine/arginine-rich SC35-like splicing factor SCL33 (SCL33) of Arabidopsis thaliana (Mouse-ear cress).